The following is a 613-amino-acid chain: ATP-dependent RNA helicase DRS1 (613 aa).

Disordered stretches follow at residues Met1–Glu20 and Gly79–Lys104. Composition is skewed to acidic residues over residues Asp9 to Asp18 and Glu88 to Val100. A Q motif motif is present at residues Thr130–Ser158. A Helicase ATP-binding domain is found at Ile161–Ile335. Ala174–Thr181 contacts ATP. The DEAD box motif lies at Asp282–Asp285. A Helicase C-terminal domain is found at Leu364–Thr541. Positions Lys504–Glu552 form a coiled coil. The disordered stretch occupies residues Thr571 to Lys613. Basic residues predominate over residues Lys572–Lys583. The span at Ala584–Lys604 shows a compositional bias: basic and acidic residues.

It belongs to the DEAD box helicase family. DDX27/DRS1 subfamily. In terms of assembly, associates with pre-ribosomal particles.

The protein localises to the nucleus. It localises to the nucleolus. The enzyme catalyses ATP + H2O = ADP + phosphate + H(+). Its function is as follows. ATP-binding RNA helicase involved in ribosome assembly. The protein is ATP-dependent RNA helicase DRS1 (DRS1) of Candida albicans (strain SC5314 / ATCC MYA-2876) (Yeast).